The sequence spans 642 residues: MPIITLPDGSKRAFEDAVTVMQVASDIGAGLAKATIAGRVNGQLKEASDLITEDAELQLITLKDEDGLHIMRHSCAHLLGHALKQLYPAAKMAIGPVVENGFYYDIDMEEKITPEDLKQIEKRMKELAKTKYEVIKEMTPRAEALATFKERQEDYKVELIEDMPDETEFGLYHHQEYIDMCRGPHVPNMGFIKAFKLTHVAGAYWRGNSDNKMLQRIYGVAFADKQELKDYLRMMEEAEKRDHRKLGKSLDLFHVDELAPGMAFWHPKGSTLYRVVENYMRQQLVENDYQEIRTPLIMDRTLWEKSGHWDKFKDNMFTTETENRDYAVKPMNCPGHIQVYNHNLSSYRDLPIRLAEFGLVHRNEPSGTLHGLMRVRSFTQDDAHIFCTPEQIKEEVQACIDLVFNTYADFGFDNIQVKFSTRPEQRVGEDDVWDLAEEALEQTLKDANLEYALQPGEGAFYGPKIEFQLKDCIGRVWQCGTIQLDFSMTQEERLNAVYIGADNEKHHPVMIHRAILGSLERFVGILVEHYEGKFPTWLAPTQLVIASIADVHNEYVNDFAKKLKKHGFRVESDLRNEKVGFKIREHTLQRVPYILVVGDQEMENGTVNVRARGGENLGSFSFEELIDHLSEDVSRLGRIVES.

A TGS domain is found at 1–61; the sequence is MPIITLPDGS…TEDAELQLIT (61 aa). Residues 242-535 form a catalytic region; sequence DHRKLGKSLD…LVEHYEGKFP (294 aa). The Zn(2+) site is built by C333, H384, and H512.

The protein belongs to the class-II aminoacyl-tRNA synthetase family. Homodimer. The cofactor is Zn(2+).

It localises to the cytoplasm. The catalysed reaction is tRNA(Thr) + L-threonine + ATP = L-threonyl-tRNA(Thr) + AMP + diphosphate + H(+). Catalyzes the attachment of threonine to tRNA(Thr) in a two-step reaction: L-threonine is first activated by ATP to form Thr-AMP and then transferred to the acceptor end of tRNA(Thr). Also edits incorrectly charged L-seryl-tRNA(Thr). This Hydrogenovibrio crunogenus (strain DSM 25203 / XCL-2) (Thiomicrospira crunogena) protein is Threonine--tRNA ligase.